A 144-amino-acid chain; its full sequence is Maximins 4/H3 type 3 (144 aa).

The first 18 residues, Met-1–Ala-18, serve as a signal peptide directing secretion. The propeptide occupies Arg-19–Arg-43. Asn-70 carries the post-translational modification Asparagine amide. The propeptide occupies Thr-74–Arg-123. An Isoleucine amide modification is found at Ile-143.

This sequence belongs to the bombinin family. In terms of tissue distribution, expressed by the skin glands.

It is found in the secreted. Functionally, maximin-4 shows antibacterial activity against both Gram-positive and Gram-negative bacteria. It also shows antimicrobial activity against the fungus C.albicans, but not against A.flavus nor P.uticale. It has little hemolytic activity. It does not possess a significant cytotoxicity against tumor cell lines. It does not possess a significant anti-HIV activity. Its function is as follows. Maximin-H3 shows antibacterial activity against both Gram-positive and Gram-negative bacteria. It also shows antimicrobial activity against the fungus C.albicans. Shows strong hemolytic activity. The sequence is that of Maximins 4/H3 type 3 from Bombina maxima (Giant fire-bellied toad).